The following is a 567-amino-acid chain: 2-succinyl-5-enolpyruvyl-6-hydroxy-3-cyclohexene-1-carboxylate synthase (567 aa).

Belongs to the TPP enzyme family. MenD subfamily. Homodimer. Mg(2+) is required as a cofactor. It depends on Mn(2+) as a cofactor. The cofactor is thiamine diphosphate.

It carries out the reaction isochorismate + 2-oxoglutarate + H(+) = 5-enolpyruvoyl-6-hydroxy-2-succinyl-cyclohex-3-ene-1-carboxylate + CO2. The protein operates within quinol/quinone metabolism; 1,4-dihydroxy-2-naphthoate biosynthesis; 1,4-dihydroxy-2-naphthoate from chorismate: step 2/7. It functions in the pathway quinol/quinone metabolism; menaquinone biosynthesis. In terms of biological role, catalyzes the thiamine diphosphate-dependent decarboxylation of 2-oxoglutarate and the subsequent addition of the resulting succinic semialdehyde-thiamine pyrophosphate anion to isochorismate to yield 2-succinyl-5-enolpyruvyl-6-hydroxy-3-cyclohexene-1-carboxylate (SEPHCHC). This Yersinia pestis bv. Antiqua (strain Antiqua) protein is 2-succinyl-5-enolpyruvyl-6-hydroxy-3-cyclohexene-1-carboxylate synthase.